Here is a 578-residue protein sequence, read N- to C-terminus: Putative diflavin flavoprotein A 2 (578 aa).

Residues 48–240 (RHGTTYNSFL…LQVVLVATGH (193 aa)) form a zinc metallo-hydrolase region. 6 residues coordinate Fe cation: H97, E99, D101, H164, D183, and H240. The Flavodoxin-like domain maps to 269–406 (VALFYVDGYG…LCREAGTDLG (138 aa)). The segment at 429-578 (IGRLSTGLYI…THHRKLGNHY (150 aa)) is flavodoxin-reductase-like.

In the N-terminal section; belongs to the zinc metallo-hydrolase group 3 family. The protein in the C-terminal section; belongs to the flavodoxin reductase family. Fe cation is required as a cofactor.

Functionally, mediates electron transfer from NADH to oxygen, reducing it to water. This modular protein has 3 redox cofactors, in other organisms the same activity requires 2 or 3 proteins. In Synechocystis sp. (strain ATCC 27184 / PCC 6803 / Kazusa), this protein is Putative diflavin flavoprotein A 2 (dfa2).